We begin with the raw amino-acid sequence, 74 residues long: Putative sulfur carrier protein NMA0882 (74 aa).

The Cysteine persulfide intermediate role is filled by C13.

This sequence belongs to the sulfur carrier protein TusA family.

This Neisseria meningitidis serogroup A / serotype 4A (strain DSM 15465 / Z2491) protein is Putative sulfur carrier protein NMA0882.